The sequence spans 109 residues: Homeobox protein E60 (109 aa).

The interval 1-31 is disordered; that stretch reads PRTRRVKRSDGRGNGGTPEEKRPRTAFSGEQ. The homeobox DNA-binding region spans 20 to 79; sequence EKRPRTAFSGEQLARLKREFAENRYLTERRRQQLSRDLGLNEAQIKIWFQNKRAKIKKAS.

It belongs to the engrailed homeobox family.

It localises to the nucleus. The protein is Homeobox protein E60 of Apis mellifera (Honeybee).